The chain runs to 784 residues: E3 UFM1-protein ligase 1 homolog (784 aa).

Positions 405–480 are disordered; the sequence is SVSTQELEDD…RGGGAGNKKA (76 aa). The span at 444–454 shows a compositional bias: basic residues; that stretch reads KSTKKHQRGKA.

Belongs to the UFL1 family.

Its function is as follows. E3 UFM1-protein ligase that mediates ufmylation of target proteins. This Drosophila yakuba (Fruit fly) protein is E3 UFM1-protein ligase 1 homolog.